Reading from the N-terminus, the 207-residue chain is Outer-membrane lipoprotein LolB (207 aa).

An N-terminal signal peptide occupies residues 1–21 (MPMRKRHFYRLLPLASLLLAA). The N-palmitoyl cysteine moiety is linked to residue Cys22. Cys22 carries the S-diacylglycerol cysteine lipid modification.

It belongs to the LolB family. Monomer.

It localises to the cell outer membrane. Plays a critical role in the incorporation of lipoproteins in the outer membrane after they are released by the LolA protein. This Yersinia pseudotuberculosis serotype IB (strain PB1/+) protein is Outer-membrane lipoprotein LolB.